A 397-amino-acid polypeptide reads, in one-letter code: Multidrug resistance protein MdtH (397 aa).

Transmembrane regions (helical) follow at residues 11–31 (WFLA…MPMI), 71–91 (FGAR…FASL), 94–114 (AQSG…GCLF), 137–157 (LLMM…SWLL), 163–183 (YVCL…LLIL), 211–231 (LVLI…IFPI), 242–262 (AVGW…YPLA), 291–311 (FATT…GIVI), 338–358 (LGLA…HDYA), and 366–386 (LPWL…VNCF).

This sequence belongs to the major facilitator superfamily. DHA1 family. MdtH (TC 2.A.1.2.21) subfamily.

Its subcellular location is the cell inner membrane. The polypeptide is Multidrug resistance protein MdtH (Aeromonas salmonicida (strain A449)).